Here is a 337-residue protein sequence, read N- to C-terminus: Ferredoxin--NADP reductase (337 aa).

Residues aspartate 33, glutamine 41, tyrosine 46, alanine 86, phenylalanine 120, aspartate 286, and threonine 327 each coordinate FAD.

It belongs to the ferredoxin--NADP reductase type 2 family. In terms of assembly, homodimer. Requires FAD as cofactor.

The enzyme catalyses 2 reduced [2Fe-2S]-[ferredoxin] + NADP(+) + H(+) = 2 oxidized [2Fe-2S]-[ferredoxin] + NADPH. The protein is Ferredoxin--NADP reductase of Rickettsia canadensis (strain McKiel).